The sequence spans 229 residues: C-&gt;U-editing enzyme APOBEC-1 (229 aa).

The 125-residue stretch at 10 to 134 (VDPTLRRRIE…QRNRQGLRDL (125 aa)) folds into the CMP/dCMP-type deaminase domain. His-61 is a binding site for Zn(2+). Glu-63 serves as the catalytic Proton donor. Cys-93 and Cys-96 together coordinate Zn(2+).

This sequence belongs to the cytidine and deoxycytidylate deaminase family. Homodimer. Interacts with A1CF; form an mRNA editing complex. Interacts with RBM47; form an mRNA editing complex. Found in a complex with CELF2/CUGBP2 and A1CF. Interacts with HNRPAB. Interacts with SYNCRIP. The cofactor is Zn(2+).

The protein resides in the cytoplasm. It localises to the nucleus. It carries out the reaction a cytidine in mRNA + H2O + H(+) = a uridine in mRNA + NH4(+). The catalysed reaction is cytidine(6666) in apoB mRNA + H2O + H(+) = uridine(6666) in apoB mRNA + NH4(+). Functionally, cytidine deaminase catalyzing the cytidine to uridine postranscriptional editing of a variety of mRNAs. Form complexes with cofactors that confer differential editing activity and selectivity. Responsible for the postranscriptional editing of a CAA codon for Gln to a UAA codon for stop in the apolipoprotein B mRNA. Also involved in CGA (Arg) to UGA (Stop) editing in the NF1 mRNA. May also play a role in the epigenetic regulation of gene expression by participating in DNA demethylation. This Mesocricetus auratus (Golden hamster) protein is C-&gt;U-editing enzyme APOBEC-1.